The sequence spans 339 residues: S-adenosylmethionine:tRNA ribosyltransferase-isomerase (339 aa).

Belongs to the QueA family. As to quaternary structure, monomer.

The protein localises to the cytoplasm. The catalysed reaction is 7-aminomethyl-7-carbaguanosine(34) in tRNA + S-adenosyl-L-methionine = epoxyqueuosine(34) in tRNA + adenine + L-methionine + 2 H(+). Its pathway is tRNA modification; tRNA-queuosine biosynthesis. Its function is as follows. Transfers and isomerizes the ribose moiety from AdoMet to the 7-aminomethyl group of 7-deazaguanine (preQ1-tRNA) to give epoxyqueuosine (oQ-tRNA). The chain is S-adenosylmethionine:tRNA ribosyltransferase-isomerase from Campylobacter fetus subsp. fetus (strain 82-40).